We begin with the raw amino-acid sequence, 389 residues long: GTPase Obg (389 aa).

The 159-residue stretch at 1 to 159 (MKFVDEAKIL…REVLLELMLL (159 aa)) folds into the Obg domain. The OBG-type G domain maps to 160–333 (ADVGMLGMPN…LCWDIMEFLK (174 aa)). Residues 166-173 (GMPNAGKS), 191-195 (FTTLV), 213-216 (DIPG), 283-286 (NKVD), and 314-316 (AAI) each bind GTP. Mg(2+) is bound by residues serine 173 and threonine 193. Positions 362-389 (QLENPDLEDDDEDWDEEDDDGVEFIYQR) are disordered. Positions 364–383 (ENPDLEDDDEDWDEEDDDGV) are enriched in acidic residues.

It belongs to the TRAFAC class OBG-HflX-like GTPase superfamily. OBG GTPase family. As to quaternary structure, monomer. Mg(2+) is required as a cofactor.

It is found in the cytoplasm. Its function is as follows. An essential GTPase which binds GTP, GDP and possibly (p)ppGpp with moderate affinity, with high nucleotide exchange rates and a fairly low GTP hydrolysis rate. Plays a role in control of the cell cycle, stress response, ribosome biogenesis and in those bacteria that undergo differentiation, in morphogenesis control. The protein is GTPase Obg of Proteus mirabilis (strain HI4320).